Consider the following 712-residue polypeptide: Polyribonucleotide nucleotidyltransferase (712 aa).

Mg(2+) contacts are provided by D487 and D493. In terms of domain architecture, KH spans 554-613; the sequence is PRIEVMNIPVDKIREVIGSGGKVIREIVEKTGAKINIEDDGTVKIASSSGKEIEAARKWI. An S1 motif domain is found at 623-691; that stretch reads GQIYEGTVVK…ERGKVRLSMK (69 aa).

This sequence belongs to the polyribonucleotide nucleotidyltransferase family. Mg(2+) serves as cofactor.

It is found in the cytoplasm. It carries out the reaction RNA(n+1) + phosphate = RNA(n) + a ribonucleoside 5'-diphosphate. Functionally, involved in mRNA degradation. Catalyzes the phosphorolysis of single-stranded polyribonucleotides processively in the 3'- to 5'-direction. The protein is Polyribonucleotide nucleotidyltransferase of Rhizobium leguminosarum bv. trifolii (strain WSM2304).